Consider the following 558-residue polypeptide: Atlastin-1 (558 aa).

Residues 1 to 29 (MAKSRRDRNSWGGFSEKSSDWSSEEEEPV) form a disordered region. Positions 1–34 (MAKSRRDRNSWGGFSEKSSDWSSEEEEPVRKAGP) are N-terminal hypervariable region (HVR). The Cytoplasmic segment spans residues 1–449 (MAKSRRDRNS…NIFHAARTPA (449 aa)). Phosphoserine occurs at positions 10, 22, and 23. Residues 64–309 (DKEVVAVSVA…LIPWLLSPES (246 aa)) form the GB1/RHD3-type G domain. 11 residues coordinate GDP: R77, K78, G79, K80, S81, F82, Q148, R217, D218, V276, and N279. R77, K78, G79, K80, S81, and F82 together coordinate GTP. Residue S81 coordinates Mg(2+). GTP-binding residues include R217, D218, and V276. The tract at residues 347–438 (MLQATAEANN…YIQYIKHNDS (92 aa)) is 3HB (three-helix bundle) domain. Residue K395 is modified to N6-acetyllysine. Positions 412–439 (EFSRRYLQQLESEIDELYIQYIKHNDSK) form a coiled coil. The linker stretch occupies residues 439–447 (KNIFHAART). The helical transmembrane segment at 450-470 (TLFVVIFITYVIAGVTGFIGL) threads the bilayer. D471 is a topological domain (lumenal). Residues 472–492 (IIASLCNMIMGLTLITLCTWA) form a helical membrane-spanning segment. Residues 493–558 (YIRYSGEYRE…PTEQPEKKKI (66 aa)) are Cytoplasmic-facing. The autoinhibitory domain stretch occupies residues 521–558 (NEALYKLYSAAATHRHLYQQAFPAPKSEPTEQPEKKKI).

The protein belongs to the TRAFAC class dynamin-like GTPase superfamily. GB1/RHD3 GTPase family. GB1 subfamily. As to quaternary structure, monomeric and homodimeric. The homodimer, transiently formed by two molecules on opposing membranes, is the active form mediating ER membrane fusion. Interacts with REEP1, REEP5, RTN3 and RTN4 (via the transmembrane region); these proteins are involved in endoplasmic reticulum tubular network organization. Interacts with ZFYVE27; both proteins are involved in endoplasmic reticulum tubular network organization. Interacts with ARL6IP1; both proteins are involved in endoplasmic reticulum tubular network organization. Interacts with SPAST; the interaction is direct, could recruit SPAST to Golgi membranes. Interacts (via N-terminal region) with MAP4K4 (via CNH regulatory domain). May interact with TMED2. Interacts with CPT1C. Post-translationally, phosphorylated. Phosphorylation, by different kinases, of the N-terminal hypervariable region (HVR) regulates the ATL1-mediated membrane tethering step. As to expression, detected in brain where it is abundant in lamina V of the cerebral cortex. Also expressed within the hippocampus, mainly in pyramidal neurons in CA1 and CA3. Weakly expressed in the striatum and more robustly in amygdala and several thalamic nuclei. Also detected in several mesopontine nuclei (at protein level).

The protein resides in the endoplasmic reticulum membrane. The protein localises to the golgi apparatus membrane. Its subcellular location is the cell projection. It is found in the axon. It carries out the reaction GTP + H2O = GDP + phosphate + H(+). Functionally, atlastin-1 (ATL1) is a membrane-anchored GTPase that mediates the GTP-dependent fusion of endoplasmic reticulum (ER) membranes, maintaining the continuous ER network. It facilitates the formation of three-way junctions where ER tubules intersect. Two atlastin-1 on neighboring ER tubules bind GTP and form loose homodimers through the GB1/RHD3-type G domains and 3HB regions. Upon GTP hydrolysis, the 3HB regions tighten, pulling the membranes together to drive their fusion. After fusion, the homodimer disassembles upon release of inorganic phosphate (Pi). Subsequently, GDP dissociates, resetting the monomers to a conformation ready for a new fusion cycle. May also regulate more or less directly Golgi biogenesis. Indirectly regulates axonal development. The sequence is that of Atlastin-1 from Rattus norvegicus (Rat).